Here is a 152-residue protein sequence, read N- to C-terminus: Ribonuclease HI (152 aa).

An RNase H type-1 domain is found at 1-142 (MDSKVVIYTD…ADKLAVQGRE (142 aa)). Positions 10, 48, 70, and 134 each coordinate Mg(2+).

Belongs to the RNase H family. As to quaternary structure, monomer. Mg(2+) is required as a cofactor.

Its subcellular location is the cytoplasm. It carries out the reaction Endonucleolytic cleavage to 5'-phosphomonoester.. Its function is as follows. Endonuclease that specifically degrades the RNA of RNA-DNA hybrids. This Rickettsia prowazekii (strain Madrid E) protein is Ribonuclease HI (rnhA).